We begin with the raw amino-acid sequence, 188 residues long: Peptidyl-tRNA hydrolase (188 aa).

Residue Y17 participates in tRNA binding. The Proton acceptor role is filled by H22. The tRNA site is built by Y65, N67, and N113.

Belongs to the PTH family. In terms of assembly, monomer.

It localises to the cytoplasm. The catalysed reaction is an N-acyl-L-alpha-aminoacyl-tRNA + H2O = an N-acyl-L-amino acid + a tRNA + H(+). Hydrolyzes ribosome-free peptidyl-tRNAs (with 1 or more amino acids incorporated), which drop off the ribosome during protein synthesis, or as a result of ribosome stalling. Its function is as follows. Catalyzes the release of premature peptidyl moieties from peptidyl-tRNA molecules trapped in stalled 50S ribosomal subunits, and thus maintains levels of free tRNAs and 50S ribosomes. The protein is Peptidyl-tRNA hydrolase of Mycoplasma pneumoniae (strain ATCC 29342 / M129 / Subtype 1) (Mycoplasmoides pneumoniae).